The primary structure comprises 810 residues: Coiled-coil domain-containing protein 15 (810 aa).

3 coiled-coil regions span residues Val65–Arg89, Asp160–Thr189, and Met638–Arg669.

Interacts with POC5, POC1B, CETN2 and FAM161A.

It localises to the cytoplasm. Its subcellular location is the cytoskeleton. The protein localises to the microtubule organizing center. It is found in the centrosome. The protein resides in the centriole. It localises to the centriolar satellite. Plays an important role in primary cilium assembly, maintenance, and length regulation. Interacts with centriole inner scaffold proteins to promote proper centriole size and integrity and assembly of functional cilia. Required for the recruitment of both the inner scaffold protein POC1B and the distal SFI1/CETN2 complex to centrioles. The chain is Coiled-coil domain-containing protein 15 (Ccdc15) from Mus musculus (Mouse).